The sequence spans 516 residues: Anthranilate synthase component 1 (516 aa).

L-tryptophan contacts are provided by residues Ser-56 and 283 to 285; that span reads PYM. 324-325 provides a ligand contact to chorismate; sequence GT. Glu-351 provides a ligand contact to Mg(2+). Residues Tyr-439, Arg-459, 473 to 475, and Gly-475 each bind chorismate; that span reads GGG. Mg(2+) is bound at residue Glu-488.

The protein belongs to the anthranilate synthase component I family. In terms of assembly, heterotetramer consisting of two non-identical subunits: a beta subunit (TrpG) and a large alpha subunit (TrpE). Mg(2+) serves as cofactor.

The enzyme catalyses chorismate + L-glutamine = anthranilate + pyruvate + L-glutamate + H(+). Its pathway is amino-acid biosynthesis; L-tryptophan biosynthesis; L-tryptophan from chorismate: step 1/5. Its activity is regulated as follows. Feedback inhibited by tryptophan. Part of a heterotetrameric complex that catalyzes the two-step biosynthesis of anthranilate, an intermediate in the biosynthesis of L-tryptophan. In the first step, the glutamine-binding beta subunit (TrpG) of anthranilate synthase (AS) provides the glutamine amidotransferase activity which generates ammonia as a substrate that, along with chorismate, is used in the second step, catalyzed by the large alpha subunit of AS (TrpE) to produce anthranilate. In the absence of TrpG, TrpE can synthesize anthranilate directly from chorismate and high concentrations of ammonia. This chain is Anthranilate synthase component 1 (trpE), found in Mycobacterium bovis (strain ATCC BAA-935 / AF2122/97).